Reading from the N-terminus, the 89-residue chain is Small ribosomal subunit protein uS14A (89 aa).

Belongs to the universal ribosomal protein uS14 family. Part of the 30S ribosomal subunit. Contacts proteins S3 and S10.

In terms of biological role, binds 16S rRNA, required for the assembly of 30S particles and may also be responsible for determining the conformation of the 16S rRNA at the A site. The polypeptide is Small ribosomal subunit protein uS14A (Bacillus velezensis (strain DSM 23117 / BGSC 10A6 / LMG 26770 / FZB42) (Bacillus amyloliquefaciens subsp. plantarum)).